Reading from the N-terminus, the 200-residue chain is Holliday junction branch migration complex subunit RuvA (200 aa).

The tract at residues 1 to 63 (MIGKLSGKID…EEHIHLYGFL (63 aa)) is domain I. The domain II stretch occupies residues 64 to 142 (TLEEKNFFNL…KIFSSSAIIK (79 aa)). Positions 142–146 (KDSSN) are flexible linker. The domain III stretch occupies residues 147–200 (ISSVEINEVIKALVNLGFTRFEAQNTVQGIITQNTKISIDELIKTALKNRNSSF).

It belongs to the RuvA family. In terms of assembly, homotetramer. Forms an RuvA(8)-RuvB(12)-Holliday junction (HJ) complex. HJ DNA is sandwiched between 2 RuvA tetramers; dsDNA enters through RuvA and exits via RuvB. An RuvB hexamer assembles on each DNA strand where it exits the tetramer. Each RuvB hexamer is contacted by two RuvA subunits (via domain III) on 2 adjacent RuvB subunits; this complex drives branch migration. In the full resolvosome a probable DNA-RuvA(4)-RuvB(12)-RuvC(2) complex forms which resolves the HJ.

It is found in the cytoplasm. The RuvA-RuvB-RuvC complex processes Holliday junction (HJ) DNA during genetic recombination and DNA repair, while the RuvA-RuvB complex plays an important role in the rescue of blocked DNA replication forks via replication fork reversal (RFR). RuvA specifically binds to HJ cruciform DNA, conferring on it an open structure. The RuvB hexamer acts as an ATP-dependent pump, pulling dsDNA into and through the RuvAB complex. HJ branch migration allows RuvC to scan DNA until it finds its consensus sequence, where it cleaves and resolves the cruciform DNA. This is Holliday junction branch migration complex subunit RuvA from Rickettsia typhi (strain ATCC VR-144 / Wilmington).